The primary structure comprises 188 residues: Apolipoprotein M (188 aa).

Positions 1–22 (MFHQIWAALLYFYGIILNSIYQ) form a signal peptide, not cleaved. Disulfide bonds link Cys-23–Cys-167, Cys-95–Cys-183, and Cys-128–Cys-157. Asn-135 is a glycosylation site (N-linked (GlcNAc...) asparagine). The tetradecanoate site is built by Glu-136 and Arg-143.

The protein belongs to the calycin superfamily. Lipocalin family. Highly divergent. In terms of assembly, interacts with LRP2; LRP2 mediates APOM renal uptake and subsequent lysosomal degradation.

It is found in the secreted. Probably involved in lipid transport. Can bind sphingosine-1-phosphate, myristic acid, palmitic acid and stearic acid, retinol, all-trans-retinoic acid and 9-cis-retinoic acid. The polypeptide is Apolipoprotein M (APOM) (Pongo abelii (Sumatran orangutan)).